The sequence spans 315 residues: Prephenate dehydratase (315 aa).

The 188-residue stretch at 3-190 (RIAYLGPQGT…ARTRFVLVGR (188 aa)) folds into the Prephenate dehydratase domain. One can recognise an ACT domain in the interval 204-281 (SVALRLPNTP…EDVRYLGSWP (78 aa)).

As to quaternary structure, homodimer.

The catalysed reaction is prephenate + H(+) = 3-phenylpyruvate + CO2 + H2O. It functions in the pathway amino-acid biosynthesis; L-phenylalanine biosynthesis; phenylpyruvate from prephenate: step 1/1. The protein is Prephenate dehydratase (pheA) of Mycobacterium sp. (strain JLS).